A 575-amino-acid chain; its full sequence is UvrABC system protein C (575 aa).

The GIY-YIG domain maps to 15 to 90 (AEPGVYQFEA…IKRHQPRYNV (76 aa)). The 36-residue stretch at 198–233 (GVLAEPLRREMETAAASQAFERAASLRDRLEAVETF) folds into the UVR domain.

This sequence belongs to the UvrC family. As to quaternary structure, interacts with UvrB in an incision complex.

The protein localises to the cytoplasm. The UvrABC repair system catalyzes the recognition and processing of DNA lesions. UvrC both incises the 5' and 3' sides of the lesion. The N-terminal half is responsible for the 3' incision and the C-terminal half is responsible for the 5' incision. In Natronomonas pharaonis (strain ATCC 35678 / DSM 2160 / CIP 103997 / JCM 8858 / NBRC 14720 / NCIMB 2260 / Gabara) (Halobacterium pharaonis), this protein is UvrABC system protein C.